We begin with the raw amino-acid sequence, 138 residues long: Large ribosomal subunit protein uL16 (138 aa).

Over residues Met1–Gln17 the composition is skewed to basic residues. The disordered stretch occupies residues Met1–Ser22.

The protein belongs to the universal ribosomal protein uL16 family. As to quaternary structure, part of the 50S ribosomal subunit.

Its function is as follows. Binds 23S rRNA and is also seen to make contacts with the A and possibly P site tRNAs. In Mycobacterium tuberculosis (strain ATCC 25177 / H37Ra), this protein is Large ribosomal subunit protein uL16.